We begin with the raw amino-acid sequence, 423 residues long: Putative competence-damage inducible protein (423 aa).

Belongs to the CinA family.

This chain is Putative competence-damage inducible protein, found in Streptococcus pyogenes serotype M18 (strain MGAS8232).